Reading from the N-terminus, the 366-residue chain is Probable protein arginine N-methyltransferase 1.2 (366 aa).

Residues 45–347 (ADYYFDSYSH…NPRDVDIKLS (303 aa)) form the SAM-dependent MTase PRMT-type domain. Residues glutamate 157 and glutamate 166 contribute to the active site.

This sequence belongs to the class I-like SAM-binding methyltransferase superfamily. Protein arginine N-methyltransferase family. As to quaternary structure, interacts with FIB2 and PRMT11.

The protein resides in the nucleus. Its subcellular location is the cytoplasm. Methylates (mono and asymmetric dimethylation) the guanidino nitrogens of arginyl residues present in a glycine and arginine-rich domain. Type I arginine methyltransferase active on both histones and non-histone proteins. Mediates the methylation of MED36A. In Arabidopsis thaliana (Mouse-ear cress), this protein is Probable protein arginine N-methyltransferase 1.2 (PRMT12).